The sequence spans 426 residues: UDP-N-acetylglucosamine 1-carboxyvinyltransferase (426 aa).

Residue 22–23 (KN) participates in phosphoenolpyruvate binding. Arg-93 is a UDP-N-acetyl-alpha-D-glucosamine binding site. Asp-117 acts as the Proton donor in catalysis. UDP-N-acetyl-alpha-D-glucosamine contacts are provided by Asp-312 and Met-334.

The protein belongs to the EPSP synthase family. MurA subfamily.

It is found in the cytoplasm. The catalysed reaction is phosphoenolpyruvate + UDP-N-acetyl-alpha-D-glucosamine = UDP-N-acetyl-3-O-(1-carboxyvinyl)-alpha-D-glucosamine + phosphate. The protein operates within cell wall biogenesis; peptidoglycan biosynthesis. In terms of biological role, cell wall formation. Adds enolpyruvyl to UDP-N-acetylglucosamine. This chain is UDP-N-acetylglucosamine 1-carboxyvinyltransferase, found in Treponema denticola (strain ATCC 35405 / DSM 14222 / CIP 103919 / JCM 8153 / KCTC 15104).